The following is a 147-amino-acid chain: Hemoglobin subunit epsilon (147 aa).

One can recognise a Globin domain in the interval 3-147; it reads HWSAEEKQLI…VAHALARKYH (145 aa). Heme b contacts are provided by histidine 64 and histidine 93.

It belongs to the globin family. Heterotetramer of two epsilon chains and two alpha chains. Hemoglobin E (Hbe) contains a alpha-A chains while hemoglobin M (Hbm) contains alpha-D chains.

Beta-type chain found in early embryos. The polypeptide is Hemoglobin subunit epsilon (HBE) (Gallus gallus (Chicken)).